The chain runs to 306 residues: Porphobilinogen deaminase (306 aa).

The residue at position 239 (C239) is an S-(dipyrrolylmethanemethyl)cysteine.

Belongs to the HMBS family. Monomer. Requires dipyrromethane as cofactor.

The catalysed reaction is 4 porphobilinogen + H2O = hydroxymethylbilane + 4 NH4(+). It participates in porphyrin-containing compound metabolism; protoporphyrin-IX biosynthesis; coproporphyrinogen-III from 5-aminolevulinate: step 2/4. Tetrapolymerization of the monopyrrole PBG into the hydroxymethylbilane pre-uroporphyrinogen in several discrete steps. This chain is Porphobilinogen deaminase, found in Helicobacter acinonychis (strain Sheeba).